Consider the following 725-residue polypeptide: Ribosomal RNA large subunit methyltransferase K/L (725 aa).

The THUMP domain maps to V46 to L157.

The protein belongs to the methyltransferase superfamily. RlmKL family.

Its subcellular location is the cytoplasm. The enzyme catalyses guanosine(2445) in 23S rRNA + S-adenosyl-L-methionine = N(2)-methylguanosine(2445) in 23S rRNA + S-adenosyl-L-homocysteine + H(+). The catalysed reaction is guanosine(2069) in 23S rRNA + S-adenosyl-L-methionine = N(2)-methylguanosine(2069) in 23S rRNA + S-adenosyl-L-homocysteine + H(+). Its function is as follows. Specifically methylates the guanine in position 2445 (m2G2445) and the guanine in position 2069 (m7G2069) of 23S rRNA. The protein is Ribosomal RNA large subunit methyltransferase K/L of Ectopseudomonas mendocina (strain ymp) (Pseudomonas mendocina).